The chain runs to 316 residues: MAEAALEAVRRALQEFPAAARDLNVPRVVPYLDEPPSPLCFYRDWVCPNRPCIIRNALQHWPALQKWSLSYLRATVGSTEVSVAVTPDGYADAVRGDRFVMPAERRLPISHVLDVLEGRAQHPGVLYVQKQCSNLPTELPQLLSDIESHVPWASESLGKMPDAVNFWLGDASAVTSLHKDHYENLYCVVSGEKHFLLHPPSDRPFIPYNLYTPATYQLTEEGTFRVVDEEAMEKVPWIPLDPLAPDLTQYPSYSQAQALHCTVRAGEMLYLPALWFHHVQQSHGCIAVNFWYDMEYDLKYSYFQLMDTLTRATGLD.

Positions 128 to 307 (VQKQCSNLPT…LKYSYFQLMD (180 aa)) constitute a JmjC domain. The Fe cation site is built by His-178, Asp-180, and His-277.

Homodimer; disulfide-linked. Interacts with DRG1 and DRG2. It depends on Fe(2+) as a cofactor.

The protein resides in the nucleus. The protein localises to the cytoplasm. It carries out the reaction L-lysyl-[protein] + 2-oxoglutarate + O2 = (3S)-3-hydroxy-L-lysyl-[protein] + succinate + CO2. Its function is as follows. Bifunctional enzyme that acts both as an endopeptidase and 2-oxoglutarate-dependent monooxygenase. Endopeptidase that cleaves histones N-terminal tails at the carboxyl side of methylated arginine or lysine residues, to generate 'tailless nucleosomes', which may trigger transcription elongation. Preferentially recognizes and cleaves monomethylated and dimethylated arginine residues of histones H2, H3 and H4. After initial cleavage, continues to digest histones tails via its aminopeptidase activity. Additionally, may play a role in protein biosynthesis by modifying the translation machinery. Acts as a Fe(2+) and 2-oxoglutarate-dependent monooxygenase, catalyzing (S)-stereospecific hydroxylation at C-3 of 'Lys-22' of DRG1 and 'Lys-21' of DRG2 translation factors (TRAFAC), promoting their interaction with ribonucleic acids (RNA). This is Bifunctional peptidase and (3S)-lysyl hydroxylase Jmjd7 from Mus musculus (Mouse).